A 634-amino-acid chain; its full sequence is Probable potassium transport system protein Kup 2 (634 aa).

12 consecutive transmembrane segments (helical) span residues 20–40 (FWTL…TSPL), 64–84 (VLSL…VLLI), 110–130 (FAAI…DAII), 148–168 (PGFD…LFLV), 174–194 (AAVA…MAVA), 224–244 (AGLL…ALYA), 258–278 (WLVL…AMLL), 290–310 (LLFP…ATII), 348–368 (IYIP…VFAF), 377–397 (AYGI…FFVM), 405–425 (AAVA…FLMA), and 430–450 (IVDG…VMVT).

Belongs to the HAK/KUP transporter (TC 2.A.72) family.

Its subcellular location is the cell inner membrane. The enzyme catalyses K(+)(in) + H(+)(in) = K(+)(out) + H(+)(out). Its function is as follows. Transport of potassium into the cell. Likely operates as a K(+):H(+) symporter. The protein is Probable potassium transport system protein Kup 2 of Rhodopseudomonas palustris (strain ATCC BAA-98 / CGA009).